The following is a 132-amino-acid chain: Large ribosomal subunit protein bL19 (132 aa).

It belongs to the bacterial ribosomal protein bL19 family.

This protein is located at the 30S-50S ribosomal subunit interface and may play a role in the structure and function of the aminoacyl-tRNA binding site. The protein is Large ribosomal subunit protein bL19 of Nitrosomonas europaea (strain ATCC 19718 / CIP 103999 / KCTC 2705 / NBRC 14298).